The following is a 306-amino-acid chain: tRNA dimethylallyltransferase 2 (306 aa).

Residue 11-18 (GPTASGKT) coordinates ATP. Substrate is bound at residue 13-18 (TASGKT). Residues 36-39 (DSRQ) are interaction with substrate tRNA.

It belongs to the IPP transferase family. As to quaternary structure, monomer. It depends on Mg(2+) as a cofactor.

It carries out the reaction adenosine(37) in tRNA + dimethylallyl diphosphate = N(6)-dimethylallyladenosine(37) in tRNA + diphosphate. Functionally, catalyzes the transfer of a dimethylallyl group onto the adenine at position 37 in tRNAs that read codons beginning with uridine, leading to the formation of N6-(dimethylallyl)adenosine (i(6)A). In Bacteroides fragilis (strain ATCC 25285 / DSM 2151 / CCUG 4856 / JCM 11019 / LMG 10263 / NCTC 9343 / Onslow / VPI 2553 / EN-2), this protein is tRNA dimethylallyltransferase 2.